Reading from the N-terminus, the 160-residue chain is Phosphopantetheine adenylyltransferase (160 aa).

Thr-9 lines the substrate pocket. ATP is bound by residues 9–10 (TF) and His-17. The substrate site is built by Lys-41, Leu-73, and Arg-87. ATP is bound by residues 88–90 (GLR), Glu-98, and 123–129 (YMFISAS).

The protein belongs to the bacterial CoaD family. As to quaternary structure, homohexamer. Requires Mg(2+) as cofactor.

The protein localises to the cytoplasm. It carries out the reaction (R)-4'-phosphopantetheine + ATP + H(+) = 3'-dephospho-CoA + diphosphate. Its pathway is cofactor biosynthesis; coenzyme A biosynthesis; CoA from (R)-pantothenate: step 4/5. Functionally, reversibly transfers an adenylyl group from ATP to 4'-phosphopantetheine, yielding dephospho-CoA (dPCoA) and pyrophosphate. This Thiobacillus denitrificans (strain ATCC 25259 / T1) protein is Phosphopantetheine adenylyltransferase.